Consider the following 120-residue polypeptide: ATP-dependent Clp protease adapter protein ClpS (120 aa).

The protein belongs to the ClpS family. As to quaternary structure, binds to the N-terminal domain of the chaperone ClpA.

In terms of biological role, involved in the modulation of the specificity of the ClpAP-mediated ATP-dependent protein degradation. The polypeptide is ATP-dependent Clp protease adapter protein ClpS (Pseudomonas fluorescens (strain ATCC BAA-477 / NRRL B-23932 / Pf-5)).